The chain runs to 578 residues: Laccase-10 (578 aa).

A signal peptide spans 1-29 (MGARCLALLLLYGTLLLLLLLPQLPLAGA). 2 Plastocyanin-like domains span residues 37–153 (NVKL…PKAG) and 163–319 (KDVP…YAPP). N-linked (GlcNAc...) asparagine glycans are attached at residues N42 and N83. The Cu cation site is built by H87 and H89. N119 carries N-linked (GlcNAc...) asparagine glycosylation. Residues H132 and H134 each coordinate Cu cation. Residues N192, N208, N244, N307, N336, N384, N392, N402, N438, N445, N448, N451, and N461 are each glycosylated (N-linked (GlcNAc...) asparagine). Residues 428-562 (DFPASPLEPF…KMAWVVNDGP (135 aa)) form the Plastocyanin-like 3 domain. Positions 479, 482, 484, 541, 542, 543, and 547 each coordinate Cu cation.

This sequence belongs to the multicopper oxidase family. The cofactor is Cu cation.

It localises to the secreted. Its subcellular location is the extracellular space. The protein resides in the apoplast. The enzyme catalyses 4 hydroquinone + O2 = 4 benzosemiquinone + 2 H2O. Lignin degradation and detoxification of lignin-derived products. In Oryza sativa subsp. japonica (Rice), this protein is Laccase-10 (LAC10).